The primary structure comprises 234 residues: Large ribosomal subunit protein uL1 (234 aa).

This sequence belongs to the universal ribosomal protein uL1 family. As to quaternary structure, part of the 50S ribosomal subunit.

Functionally, binds directly to 23S rRNA. The L1 stalk is quite mobile in the ribosome, and is involved in E site tRNA release. Its function is as follows. Protein L1 is also a translational repressor protein, it controls the translation of the L11 operon by binding to its mRNA. This is Large ribosomal subunit protein uL1 from Desulfosudis oleivorans (strain DSM 6200 / JCM 39069 / Hxd3) (Desulfococcus oleovorans).